A 70-amino-acid chain; its full sequence is Conotoxin Lt3.4 (70 aa).

A signal peptide spans Met1–Ala24. A propeptide spanning residues Asp25–Arg54 is cleaved from the precursor. Gln55 carries the post-translational modification Pyrrolidone carboxylic acid. 3 cysteine pairs are disulfide-bonded: Cys56/Cys68, Cys57/Cys66, and Cys62/Cys69.

This sequence belongs to the conotoxin M superfamily. Expressed by the venom duct.

The protein resides in the secreted. This chain is Conotoxin Lt3.4, found in Conus litteratus (Lettered cone).